The chain runs to 227 residues: Guanylate kinase (227 aa).

Residues 21 to 199 (GNLFMVVAPS…ALAELECIVA (179 aa)) form the Guanylate kinase-like domain. 28–35 (APSGAGKS) serves as a coordination point for ATP.

It belongs to the guanylate kinase family.

Its subcellular location is the cytoplasm. It carries out the reaction GMP + ATP = GDP + ADP. Functionally, essential for recycling GMP and indirectly, cGMP. In Burkholderia mallei (strain ATCC 23344), this protein is Guanylate kinase.